Reading from the N-terminus, the 772-residue chain is Protein transport protein SEC23 F (772 aa).

Zn(2+)-binding residues include C65, C68, C87, and C90. Positions 65–90 (CKTCKALLNAFARVDFAAMNWVCPFC) are zinc finger-like.

The protein belongs to the SEC23/SEC24 family. SEC23 subfamily. Component of the coat protein complex II (COPII), composed of at least five proteins: the Sec23/24 complex, the Sec13/31 complex and Sar1. Interacts with SEC24A.

The protein resides in the cytoplasmic vesicle. It localises to the COPII-coated vesicle membrane. It is found in the endoplasmic reticulum membrane. The protein localises to the membrane. Its function is as follows. Component of the coat protein complex II (COPII) which promotes the formation of transport vesicles from the endoplasmic reticulum (ER). The coat has two main functions, the physical deformation of the endoplasmic reticulum membrane into vesicles and the selection of cargo molecules. This Arabidopsis thaliana (Mouse-ear cress) protein is Protein transport protein SEC23 F.